The primary structure comprises 216 residues: Large ribosomal subunit protein uL24m (216 aa).

Residues 1–9 constitute a mitochondrion transit peptide; that stretch reads MRLTALLSM. The 34-residue stretch at 56-89 folds into the KOW domain; sequence VVRGDTVEVLSGKEKGKQGKVAQVIRARNWVILE. A disordered region spans residues 167–186; it reads PQQWKDGPKDTSPEDTLQKT.

The protein belongs to the universal ribosomal protein uL24 family. In terms of assembly, component of the mitochondrial ribosome large subunit (39S) which comprises a 16S rRNA and about 50 distinct proteins.

It localises to the mitochondrion. The polypeptide is Large ribosomal subunit protein uL24m (mrpl24) (Danio rerio (Zebrafish)).